The sequence spans 121 residues: Acid shock protein (121 aa).

The N-terminal stretch at 1-21 (MKKVLALMVAATLGLSSVAFA) is a signal peptide. The propeptide occupies 22-63 (ADTTATATPAATSTTATVAAQTKATQHQKHKVTKKTTEQKAQ). The segment at 40–121 (AAQTKATQHQ…AKKPVAAPAA (82 aa)) is disordered. Over residues 84-93 (AAKKHVKKAS) the composition is skewed to basic residues. The segment covering 94 to 103 (VQKAPVQKAQ) has biased composition (low complexity). Basic residues predominate over residues 104 to 113 (AAKKHHKTAK).

Belongs to the Asr family. Proteolytic processing gives rise to the active protein.

The protein resides in the periplasm. Required for growth and/or survival at acidic conditions. This is Acid shock protein from Yersinia pestis bv. Antiqua (strain Antiqua).